We begin with the raw amino-acid sequence, 355 residues long: S-adenosylmethionine:tRNA ribosyltransferase-isomerase (355 aa).

Belongs to the QueA family. As to quaternary structure, monomer.

Its subcellular location is the cytoplasm. The catalysed reaction is 7-aminomethyl-7-carbaguanosine(34) in tRNA + S-adenosyl-L-methionine = epoxyqueuosine(34) in tRNA + adenine + L-methionine + 2 H(+). The protein operates within tRNA modification; tRNA-queuosine biosynthesis. Its function is as follows. Transfers and isomerizes the ribose moiety from AdoMet to the 7-aminomethyl group of 7-deazaguanine (preQ1-tRNA) to give epoxyqueuosine (oQ-tRNA). The sequence is that of S-adenosylmethionine:tRNA ribosyltransferase-isomerase from Burkholderia lata (strain ATCC 17760 / DSM 23089 / LMG 22485 / NCIMB 9086 / R18194 / 383).